The primary structure comprises 654 residues: Tetracycline resistance protein TetQ (654 aa).

The tr-type G domain occupies 1–244 (MNIINLGILA…AISSFILPPE (244 aa)). Residues 10–17 (AHIDAGKT), 74–78 (DTPGH), and 128–131 (NKID) contribute to the GTP site.

It belongs to the TRAFAC class translation factor GTPase superfamily. Classic translation factor GTPase family. TetM/TetO subfamily.

Its function is as follows. Abolishes the inhibitory effect of tetracyclin on protein synthesis by a non-covalent modification of the ribosomes. This Prevotella intermedia protein is Tetracycline resistance protein TetQ (tetQ).